A 125-amino-acid polypeptide reads, in one-letter code: RxLR effector protein Avh6 (125 aa).

Residues 1 to 25 (MRLSSTTFVVLAAVLLASGTAVSKA) form the signal peptide. Positions 48–70 (RFLRSHHTEDGEAKLSNYDNEER) match the RxLR-dEER motif.

It belongs to the RxLR effector family.

The protein localises to the secreted. Its subcellular location is the host cell. Functionally, effector that suppresses plant defense responses during the early stages of pathogen infection. Suppresses cell death induced by effectors and PAMPs in plant hosts. Triggers a hypersensitive response (HR) in the presence of Rps1d. Suppresses BAX-induced cell death and enhan,ced P.capsici infection in Nicotiana benthamiana. Also suppresses effector-triggered immunity induction by associating with Avr1b and Rps1b, suggesting a role in suppressing plant immunity. The protein is RxLR effector protein Avh6 of Phytophthora sojae (strain P6497) (Soybean stem and root rot agent).